Consider the following 747-residue polypeptide: Histone-lysine N-methyltransferase EZH1 (747 aa).

The segment at 188 to 231 is disordered; that stretch reads DEEEEGHNDTSDGKQDDSKEDLPVTRKRKRHAIEGNKKSSKKQF. The span at 194–211 shows a compositional bias: basic and acidic residues; sequence HNDTSDGKQDDSKEDLPV. A Glycyl lysine isopeptide (Lys-Gly) (interchain with G-Cter in SUMO2) cross-link involves residue Lys-327. The tract at residues 378–421 is disordered; the sequence is SAVAETKEGDSDRDTGNDWASSSSEANSRCQTPTKQKASPAPPQ. Residues 382–393 show a composition bias toward basic and acidic residues; that stretch reads ETKEGDSDRDTG. The segment covering 395 to 414 has biased composition (polar residues); it reads DWASSSSEANSRCQTPTKQK. A Nuclear localization signal motif is present at residues 491–496; sequence QKKKRK. In terms of domain architecture, CXC spans 504 to 606; that stretch reads CRKIQLKKDN…CKVVSCKNCS (103 aa). The region spanning 613 to 728 is the SET domain; sequence KHLLLAPSDV…AGEELFLDYR (116 aa).

The protein belongs to the class V-like SAM-binding methyltransferase superfamily. Histone-lysine methyltransferase family. EZ subfamily. In terms of assembly, component of the PRC2/EED-EZH1 complex, which includes EED, EZH1, SUZ12, RBBP4 and AEBP2. The PRC2/EED-EZH1 is less abundant than the PRC2/EED-EZH2 complex, has weak methyltransferase activity and compacts chromatin in the absence of the methyltransferase cofactor S-adenosyl-L-methionine (SAM). Interacts with EZHIP; the interaction blocks EZH1 methyltransferase activity.

It localises to the nucleus. It carries out the reaction L-lysyl(27)-[histone H3] + 3 S-adenosyl-L-methionine = N(6),N(6),N(6)-trimethyl-L-lysyl(27)-[histone H3] + 3 S-adenosyl-L-homocysteine + 3 H(+). In terms of biological role, polycomb group (PcG) protein. Catalytic subunit of the PRC2/EED-EZH1 complex, which methylates 'Lys-27' of histone H3, leading to transcriptional repression of the affected target gene. Able to mono-, di- and trimethylate 'Lys-27' of histone H3 to form H3K27me1, H3K27me2 and H3K27me3, respectively. Required for embryonic stem cell derivation and self-renewal, suggesting that it is involved in safeguarding embryonic stem cell identity. Compared to EZH2-containing complexes, it is less abundant in embryonic stem cells, has weak methyltransferase activity and plays a less critical role in forming H3K27me3, which is required for embryonic stem cell identity and proper differentiation. This is Histone-lysine N-methyltransferase EZH1 (EZH1) from Pongo abelii (Sumatran orangutan).